Reading from the N-terminus, the 263-residue chain is Undecaprenyl-diphosphatase 2 (263 aa).

Helical transmembrane passes span 17–37, 42–62, 83–103, 106–126, 142–162, 183–203, 216–236, and 242–262; these read TEFL…LIGF, AKVF…VIFW, LHII…HSAI, VLFG…LMIV, ITYK…WPGF, AEYT…LDLI, LFAT…VSFL, and VKLT…YFFI.

This sequence belongs to the UppP family.

The protein resides in the cell membrane. The enzyme catalyses di-trans,octa-cis-undecaprenyl diphosphate + H2O = di-trans,octa-cis-undecaprenyl phosphate + phosphate + H(+). Catalyzes the dephosphorylation of undecaprenyl diphosphate (UPP). Confers resistance to bacitracin. This chain is Undecaprenyl-diphosphatase 2, found in Bacillus anthracis.